The primary structure comprises 287 residues: 3-methyl-2-oxobutanoate hydroxymethyltransferase (287 aa).

Residues 1-19 (MSTLPKTLTLDTSTSRANP) show a composition bias toward polar residues. The interval 1-24 (MSTLPKTLTLDTSTSRANPTPQPM) is disordered. Positions 66 and 105 each coordinate Mg(2+). 3-methyl-2-oxobutanoate is bound by residues 66–67 (DS), Asp105, and Lys135. Glu137 lines the Mg(2+) pocket. Glu204 serves as the catalytic Proton acceptor.

It belongs to the PanB family. As to quaternary structure, homodecamer; pentamer of dimers. Mg(2+) serves as cofactor.

It localises to the cytoplasm. The enzyme catalyses 3-methyl-2-oxobutanoate + (6R)-5,10-methylene-5,6,7,8-tetrahydrofolate + H2O = 2-dehydropantoate + (6S)-5,6,7,8-tetrahydrofolate. The protein operates within cofactor biosynthesis; (R)-pantothenate biosynthesis; (R)-pantoate from 3-methyl-2-oxobutanoate: step 1/2. In terms of biological role, catalyzes the reversible reaction in which hydroxymethyl group from 5,10-methylenetetrahydrofolate is transferred onto alpha-ketoisovalerate to form ketopantoate. The protein is 3-methyl-2-oxobutanoate hydroxymethyltransferase of Sphingopyxis alaskensis (strain DSM 13593 / LMG 18877 / RB2256) (Sphingomonas alaskensis).